We begin with the raw amino-acid sequence, 368 residues long: Probable dual-specificity RNA methyltransferase RlmN (368 aa).

Glu-100 acts as the Proton acceptor in catalysis. One can recognise a Radical SAM core domain in the interval 106 to 344 (QYYGLSVCVT…CVVRQEHGTD (239 aa)). Cys-113 and Cys-349 are joined by a disulfide. Positions 120, 124, and 127 each coordinate [4Fe-4S] cluster. Residues 172 to 173 (GE), Ser-204, 227 to 229 (SLH), and Asn-305 each bind S-adenosyl-L-methionine. Cys-349 serves as the catalytic S-methylcysteine intermediate.

It belongs to the radical SAM superfamily. RlmN family. [4Fe-4S] cluster serves as cofactor.

It localises to the cytoplasm. The enzyme catalyses adenosine(2503) in 23S rRNA + 2 reduced [2Fe-2S]-[ferredoxin] + 2 S-adenosyl-L-methionine = 2-methyladenosine(2503) in 23S rRNA + 5'-deoxyadenosine + L-methionine + 2 oxidized [2Fe-2S]-[ferredoxin] + S-adenosyl-L-homocysteine. It carries out the reaction adenosine(37) in tRNA + 2 reduced [2Fe-2S]-[ferredoxin] + 2 S-adenosyl-L-methionine = 2-methyladenosine(37) in tRNA + 5'-deoxyadenosine + L-methionine + 2 oxidized [2Fe-2S]-[ferredoxin] + S-adenosyl-L-homocysteine. In terms of biological role, specifically methylates position 2 of adenine 2503 in 23S rRNA and position 2 of adenine 37 in tRNAs. This is Probable dual-specificity RNA methyltransferase RlmN from Streptococcus agalactiae serotype III (strain NEM316).